We begin with the raw amino-acid sequence, 438 residues long: Xylose isomerase (438 aa).

Residues His-100 and Asp-103 contribute to the active site. Mg(2+) is bound by residues Glu-231, Glu-267, His-270, Asp-295, Asp-306, Asp-308, and Asp-338.

It belongs to the xylose isomerase family. In terms of assembly, homotetramer. The cofactor is Mg(2+).

The protein resides in the cytoplasm. The catalysed reaction is alpha-D-xylose = alpha-D-xylulofuranose. The polypeptide is Xylose isomerase (xylA) (Thermoanaerobacter pseudethanolicus (strain ATCC 33223 / 39E) (Clostridium thermohydrosulfuricum)).